The chain runs to 216 residues: 3-isopropylmalate dehydratase small subunit (216 aa).

This sequence belongs to the LeuD family. LeuD type 1 subfamily. As to quaternary structure, heterodimer of LeuC and LeuD.

It carries out the reaction (2R,3S)-3-isopropylmalate = (2S)-2-isopropylmalate. It functions in the pathway amino-acid biosynthesis; L-leucine biosynthesis; L-leucine from 3-methyl-2-oxobutanoate: step 2/4. Catalyzes the isomerization between 2-isopropylmalate and 3-isopropylmalate, via the formation of 2-isopropylmaleate. In Polaromonas naphthalenivorans (strain CJ2), this protein is 3-isopropylmalate dehydratase small subunit.